A 672-amino-acid polypeptide reads, in one-letter code: Hydrogenase-4 component B (672 aa).

At 1–5 (MDALQ) the chain is on the periplasmic side. Residues 6–26 (LLTWSLILYLFASLASLFLLG) form a helical membrane-spanning segment. At 27–30 (LDRL) the chain is on the cytoplasmic side. The helical transmembrane segment at 31–51 (AIKLSGITSLVGGVIGIISGI) threads the bilayer. The Periplasmic segment spans residues 52-79 (TQLHAGVTLVARFAPPFEFADLTLRMDS). Residues 80 to 100 (LSAFMVLVISLLVVVCSLYSL) form a helical membrane-spanning segment. Topologically, residues 101 to 119 (TYMREYEGKGAAAMGFFMN) are cytoplasmic. The helical transmembrane segment at 120–140 (IFIASMVALLVMDNAFWFIVL) threads the bilayer. Residues 141–164 (FEMMSLSSWFLVIARQDKTSINAG) lie on the Periplasmic side of the membrane. Residues 165 to 185 (MLYFFIAHAGSVLIMIAFLLM) form a helical membrane-spanning segment. Residues 186 to 199 (GRESGSLDFASFRT) lie on the Cytoplasmic side of the membrane. Residues 200-220 (LSLSPGLASAVFLLAFFGFGA) traverse the membrane as a helical segment. Over 221-242 (KAGMMPLHSWLPRAHPAAPSHA) the chain is Periplasmic. Residues 243–263 (SALMSGVMVKIGIFGILKVAM) form a helical membrane-spanning segment. Topologically, residues 264-272 (DLLAQTGLP) are cytoplasmic. Residues 273–293 (LWWGILVMAIGAISALLGVLY) form a helical membrane-spanning segment. The Periplasmic segment spans residues 294-311 (ALAEQDIKRLLAWSTVEN). The chain crosses the membrane as a helical span at residues 312–332 (VGIILLAVGVAMVGLSLHDPL). The Cytoplasmic portion of the chain corresponds to 333 to 342 (LTVVGLLGAL). A helical membrane pass occupies residues 343-363 (FHLLNHALFKGLLFLGAGAII). Residues 364-384 (SRLHTHDMEKMGALAKRMPWT) lie on the Periplasmic side of the membrane. Residues 385 to 405 (AAACLIGCLAISAIPPLNGFI) traverse the membrane as a helical segment. At 406–427 (SEWYTWQSLFSLSRVEAVALQL) the chain is on the cytoplasmic side. Residues 428–448 (AGPIAMVMLAVTGGLAVMCFV) form a helical membrane-spanning segment. Residues 449-474 (KMYGITFCGAPRSTHAEEAQEVPNTM) are Periplasmic-facing. A helical membrane pass occupies residues 475-495 (IVAMLLLAALCVLIALSASWL). At 496–504 (APKIMHIAH) the chain is on the cytoplasmic side. A helical transmembrane segment spans residues 505–525 (AFTNTPPATVASGIALVPGTF). Residues 526–531 (HTQVTP) are Periplasmic-facing. A helical membrane pass occupies residues 532-552 (SLLLLLLLAMPLLPGLYWLWC). Residues 553-651 (RSRRAAFRRT…KEIQHLQSGD (99 aa)) are Cytoplasmic-facing. A helical transmembrane segment spans residues 652–672 (FRLYCLYVVAALVVLLIAIAV).

The protein belongs to the complex I subunit 5 family.

Its subcellular location is the cell inner membrane. Functionally, possible component of hydrogenase 4. The chain is Hydrogenase-4 component B from Escherichia coli (strain K12).